Here is a 675-residue protein sequence, read N- to C-terminus: MEVIQYPNSPFKLHQPFPPAGDQPTAIAGLLEGLSDGLAYQTLLGVTGSGKTYTMANVIAQSGRPAIIMAHNKTLAAQLYAEMREFFPENAVEYFVSYYDYYQPEAYVPSRDLFIEKDSAINEHIEQMRLSATKNLMTRNDVIIVATVSAIYGIGDPTEYQQMVLSVKEGDTIEQRDIIATLVSMQYERGDLDFKRGSFRVRGDVIDVYPAESSENALRISLFDDEIDRLDMFDPLSGSLIQRVGRYTVFPSSHYVTPRDTVLRACESIKEELRERIEFFAREQRPVEQQRIEQRTRFDLEMLYEMGFCKGIENYSRHFSGKKEGEPPPTLMDYLPDNAIMFIDESHVTVTQIGGMYKGDASRKQNLVDYGFRLPSARDNRPLKFHEFEKVMPQTIFVSATPAKYEEEHAGQVVEQVVRPTGLVDPQIIIRPVATQVDDLMSEINDRIEKGERVLVTTLTKRMAEQLTDYYSELGIKVRYLHSDIDTVERVEIIRDLRLGLFDVLVGINLLREGLDIPEVSLVAILDADKEGFLRSHRSLIQTIGRAARNVNGVAILYADKITDSMKAAIDETERRREKQIKFNEEQGIVPQQIKKQVKDIIDGVYHEEDGSKGRLKGKNKVKVGEIHNEEDAIKEIAKLEKAMQQAARDLQFEEAAVLRDRIRDIKENLLFGAE.

Residues glutamate 32 to valine 417 enclose the Helicase ATP-binding domain. Glycine 45 to threonine 52 provides a ligand contact to ATP. The short motif at tyrosine 98 to isoleucine 121 is the Beta-hairpin element. The region spanning glutamine 436–isoleucine 602 is the Helicase C-terminal domain. The UVR domain maps to isoleucine 634–asparagine 669.

Belongs to the UvrB family. As to quaternary structure, forms a heterotetramer with UvrA during the search for lesions. Interacts with UvrC in an incision complex.

It is found in the cytoplasm. In terms of biological role, the UvrABC repair system catalyzes the recognition and processing of DNA lesions. A damage recognition complex composed of 2 UvrA and 2 UvrB subunits scans DNA for abnormalities. Upon binding of the UvrA(2)B(2) complex to a putative damaged site, the DNA wraps around one UvrB monomer. DNA wrap is dependent on ATP binding by UvrB and probably causes local melting of the DNA helix, facilitating insertion of UvrB beta-hairpin between the DNA strands. Then UvrB probes one DNA strand for the presence of a lesion. If a lesion is found the UvrA subunits dissociate and the UvrB-DNA preincision complex is formed. This complex is subsequently bound by UvrC and the second UvrB is released. If no lesion is found, the DNA wraps around the other UvrB subunit that will check the other stand for damage. This chain is UvrABC system protein B, found in Neisseria meningitidis serogroup B (strain ATCC BAA-335 / MC58).